A 635-amino-acid polypeptide reads, in one-letter code: Extracellular metalloproteinase 1 (635 aa).

A signal peptide spans 1-19 (MHGLLLAAGLLSLPLHVLA). A propeptide spanning residues 20–246 (HPQPSTSTSL…VHNVVDYVAH (227 aa)) is cleaved from the precursor. N-linked (GlcNAc...) asparagine glycosylation is present at Asn-287. His-430 lines the Zn(2+) pocket. The active site involves Glu-431. His-434 is a binding site for Zn(2+). Asn-475, Asn-594, and Asn-623 each carry an N-linked (GlcNAc...) asparagine glycan.

It belongs to the peptidase M36 family. Zn(2+) is required as a cofactor.

It is found in the secreted. Its function is as follows. Secreted metalloproteinase probably acting as a virulence factor. This chain is Extracellular metalloproteinase 1 (MEP1), found in Trichophyton rubrum (Athlete's foot fungus).